Here is a 90-residue protein sequence, read N- to C-terminus: Probable Fe(2+)-trafficking protein (90 aa).

This sequence belongs to the Fe(2+)-trafficking protein family.

In terms of biological role, could be a mediator in iron transactions between iron acquisition and iron-requiring processes, such as synthesis and/or repair of Fe-S clusters in biosynthetic enzymes. The protein is Probable Fe(2+)-trafficking protein of Laribacter hongkongensis (strain HLHK9).